A 149-amino-acid polypeptide reads, in one-letter code: MAAKVEPFWIRKTLEHLDQEEWESLCDGCGLCCLQKLEDEDDNSVYYTRIACKLLDLKTCQCTDYPNRRASVPDCIQLTPGQADQFKWLPPTCGYRLVSERNDLPLWHHLVCGDRDAVHHERISQSGRMLSEGSVPEDDWEDYLIFRAG.

The protein belongs to the UPF0260 family.

The protein is UPF0260 protein PFLU_1520 of Pseudomonas fluorescens (strain SBW25).